A 436-amino-acid polypeptide reads, in one-letter code: Forkhead box protein I3 (436 aa).

Ser132 carries the post-translational modification Phosphoserine. Residues 158–252 (RPPYSYSALI…DNGNFRRKRK (95 aa)) constitute a DNA-binding region (fork-head). The short motif at 248-254 (RRKRKRR) is the Nuclear localization signal element. Disordered regions lie at residues 249–319 (RKRK…PGGS) and 340–410 (SSSG…SGGQ). Residues 257 to 277 (ASSASTSTVAAGTTKSEEGLS) are compositionally biased toward low complexity. A compositionally biased stretch (gly residues) spans 278–287 (SGLGSGVGGK). Phosphoserine is present on residues Ser292 and Ser302. A compositionally biased stretch (low complexity) spans 385-410 (SNGASSGSGQRSSYYSPFPASTSGGQ). Residues 422–430 (SMVNSLIYP) carry the 9aaTAD motif.

In terms of processing, phosphorylation promotes the transcription factor activity. Dephosphorylation by protein phosphatase 2A (PP2A) reduces its activity.

It localises to the nucleus. Functionally, transcription factor required for pharyngeal arch development, and which is involved in hair, ear, jaw and dental development. May act as a pioneer transcription factor during pharyngeal arch development. Required for the development of the epithelium of hair and whisker placodes and that of teeth. Required for hair follicle stem cell specification. Acts downstream of TBX1 for the formation of the thymus and parathyroid glands from the third pharyngeal pouch. The polypeptide is Forkhead box protein I3 (Canis lupus familiaris (Dog)).